Reading from the N-terminus, the 265-residue chain is 5'-nucleotidase SurE (265 aa).

A divalent metal cation contacts are provided by aspartate 8, aspartate 9, serine 41, and asparagine 100.

This sequence belongs to the SurE nucleotidase family. A divalent metal cation is required as a cofactor.

It is found in the cytoplasm. The catalysed reaction is a ribonucleoside 5'-phosphate + H2O = a ribonucleoside + phosphate. Nucleotidase that shows phosphatase activity on nucleoside 5'-monophosphates. The polypeptide is 5'-nucleotidase SurE (Brevibacillus brevis (strain 47 / JCM 6285 / NBRC 100599)).